Consider the following 150-residue polypeptide: MAYIDPTLLILLVLAGLGIISHNMTVTLAILVLLAIRITPLNSYFPWVEKYGLSIGIVVLTIGVMAPIASGKITASEVMHSFLHWKSLLAILIGVAVSWLGGRGVSLMSNQPSVVAGLLVGTVMGVALFRGVPVGPLIAAGLLSLLIGKT.

Transmembrane regions (helical) follow at residues 1-21 (MAYI…GIIS), 51-71 (YGLS…IASG), 82-102 (FLHW…WLGG), and 127-147 (ALFR…SLLI).

Belongs to the UPF0756 family.

It localises to the cell membrane. This Pectobacterium atrosepticum (strain SCRI 1043 / ATCC BAA-672) (Erwinia carotovora subsp. atroseptica) protein is UPF0756 membrane protein ECA1265.